A 497-amino-acid polypeptide reads, in one-letter code: Signal recognition particle subunit SRP54 2 (497 aa).

The tract at residues 1–295 (MVLAQLGGSI…DVKPFVSRLL (295 aa)) is G-domain. GTP-binding positions include 108-115 (GLQGSGKT), 190-194 (DTSGR), and 248-251 (TKLD). Residues 296 to 497 (GMGDLSGLMD…MLGGMGLGGD (202 aa)) are M-domain.

Belongs to the GTP-binding SRP family. SRP54 subfamily. Component of a signal recognition particle (SRP) complex that consists of a 7SL RNA molecule of 300 nucleotides and six protein subunits: SRP72, SRP68, SRP54, SRP19, SRP14 and SRP9.

Its subcellular location is the cytoplasm. It localises to the endoplasmic reticulum. The enzyme catalyses GTP + H2O = GDP + phosphate + H(+). In terms of biological role, component of the signal recognition particle (SRP) complex, a ribonucleoprotein complex that mediates the cotranslational targeting of secretory and membrane proteins to the endoplasmic reticulum (ER). As part of the SRP complex, associates with the SRP receptor (SR) component SRPRA to target secretory proteins to the endoplasmic reticulum membrane. Binds to the signal sequence of presecretory proteins when they emerge from the ribosomes. Displays basal GTPase activity, and stimulates reciprocal GTPase activation of the SR subunit SRPRA. Forms a guanosine 5'-triphosphate (GTP)-dependent complex with the SR subunit SRPRA. SR compaction and GTPase mediated rearrangement of SR drive SRP-mediated cotranslational protein translocation into the ER. Requires the presence of SRP9/SRP14 and/or SRP19 to stably interact with RNA. This chain is Signal recognition particle subunit SRP54 2 (SRP54-2), found in Hordeum vulgare (Barley).